The sequence spans 186 residues: Transcriptional repressor NrdR (186 aa).

A zinc finger lies at 3-34 (CPFCRHPDSRVVDSREAEEGAAIRRRRSCPAC). Positions 46–136 (LRVRKRSGAT…VYLAFESLGD (91 aa)) constitute an ATP-cone domain. Residues 149–169 (AGGGEPPVAGKPTTMPAATGA) are disordered.

Belongs to the NrdR family. The cofactor is Zn(2+).

In terms of biological role, negatively regulates transcription of bacterial ribonucleotide reductase nrd genes and operons by binding to NrdR-boxes. This Parafrankia sp. (strain EAN1pec) protein is Transcriptional repressor NrdR.